The sequence spans 71 residues: Translational regulator CsrA (71 aa).

Positions 50 to 71 (RIRHEKDGDVPEAAPGQGADPQ) are disordered.

This sequence belongs to the CsrA/RsmA family. Homodimer; the beta-strands of each monomer intercalate to form a hydrophobic core, while the alpha-helices form wings that extend away from the core.

Its subcellular location is the cytoplasm. In terms of biological role, a key translational regulator that binds mRNA to regulate translation initiation and/or mRNA stability. Mediates global changes in gene expression, shifting from rapid growth to stress survival by linking envelope stress, the stringent response and the catabolite repression systems. Usually binds in the 5'-UTR; binding at or near the Shine-Dalgarno sequence prevents ribosome-binding, repressing translation, binding elsewhere in the 5'-UTR can activate translation and/or stabilize the mRNA. Its function is antagonized by small RNA(s). The polypeptide is Translational regulator CsrA (Halorhodospira halophila (strain DSM 244 / SL1) (Ectothiorhodospira halophila (strain DSM 244 / SL1))).